A 245-amino-acid polypeptide reads, in one-letter code: MATRLQFENNCEVGVFSKLTNAYCLVAIGGSENFYSAFESELADVIPIVKTSIGGTRIIGRLCAGNKNGLLVPHTTTDQELQHLRNSLPDQVVVQRIDERLSALGNCIACNDYVALAHTDLDKETEEIIADVLGVEVFRQTIAGNILVGSYCALSNKGGMVHPHTSVEDLEELSTLLQVPLVAGTVNRGSEVIAAGMTVNDWTSFCGSDTTATELSVIDSIFKLREAQPSSIVDEMRKSLIDTYV.

This sequence belongs to the eIF-6 family. Monomer. Associates with the 60S ribosomal subunit.

The protein resides in the cytoplasm. It is found in the nucleus. Its subcellular location is the nucleolus. Functionally, binds to the 60S ribosomal subunit and prevents its association with the 40S ribosomal subunit to form the 80S initiation complex in the cytoplasm. May also be involved in ribosome biogenesis. This Arabidopsis thaliana (Mouse-ear cress) protein is Eukaryotic translation initiation factor 6-2.